We begin with the raw amino-acid sequence, 206 residues long: Flavin reductase (NADPH) (206 aa).

NADP(+) contacts are provided by G10, T12, G13, T15, R35, S38, and R39. Position 42 is a phosphoserine (S42). Positions 54, 55, 75, and 76 each coordinate NADP(+). A Phosphoserine modification is found at S82. The NADP(+) site is built by M87, C109, H132, H153, and I154. The active-site S-nitroso-cysteine intermediate; for S-nitroso-CoA-dependent nitrosyltransferase activity is the C109. C188 acts as the S-nitroso-cysteine intermediate; for S-nitroso-CoA-dependent nitrosyltransferase activity in catalysis.

Belongs to the BLVRB family. In terms of assembly, monomer.

The protein resides in the cytoplasm. The enzyme catalyses reduced riboflavin + NADP(+) = riboflavin + NADPH + 2 H(+). It carries out the reaction bilirubin IXbeta + NADP(+) = biliverdin IXbeta + NADPH + H(+). It catalyses the reaction FMNH2 + NAD(+) = FMN + NADH + 2 H(+). The catalysed reaction is FMNH2 + NADP(+) = FMN + NADPH + 2 H(+). The enzyme catalyses S-nitroso-CoA + L-cysteinyl-[protein] = S-nitroso-L-cysteinyl-[protein] + CoA. It carries out the reaction L-cysteinyl-[SCAN] + S-nitroso-CoA = S-nitroso-L-cysteinyl-[SCAN] + CoA. It catalyses the reaction S-nitroso-L-cysteinyl-[SCAN] + L-cysteinyl-[protein] = L-cysteinyl-[SCAN] + S-nitroso-L-cysteinyl-[protein]. Enzyme that can both act as a NAD(P)H-dependent reductase and a S-nitroso-CoA-dependent nitrosyltransferase. Promotes fetal heme degradation during development. Also expressed in adult tissues, where it acts as a regulator of hematopoiesis, intermediary metabolism (glutaminolysis, glycolysis, TCA cycle and pentose phosphate pathway) and insulin signaling. Has a broad specificity oxidoreductase activity by catalyzing the NAD(P)H-dependent reduction of a variety of flavins, such as riboflavin, FAD or FMN, biliverdins, methemoglobin and PQQ (pyrroloquinoline quinone). Contributes to fetal heme catabolism by catalyzing reduction of biliverdin IXbeta into bilirubin IXbeta in the liver. Biliverdin IXbeta, which constitutes the major heme catabolite in the fetus is not present in adult. Does not reduce bilirubin IXalpha. Can also reduce the complexed Fe(3+) iron to Fe(2+) in the presence of FMN and NADPH. Acts as a protein nitrosyltransferase by catalyzing nitrosylation of cysteine residues of target proteins, such as HMOX2, INSR and IRS1. S-nitroso-CoA-dependent nitrosyltransferase activity is mediated via a 'ping-pong' mechanism: BLVRB first associates with both S-nitroso-CoA and protein substrate, nitric oxide group is then transferred from S-nitroso-CoA to Cys-109 and Cys-188 residues of BLVRB and from S-nitroso-BLVRB to the protein substrate. Inhibits insulin signaling by mediating nitrosylation of INSR and IRS1, leading to their inhibition. In Mus musculus (Mouse), this protein is Flavin reductase (NADPH) (Blvrb).